We begin with the raw amino-acid sequence, 180 residues long: GTP cyclohydrolase 1 (180 aa).

The Zn(2+) site is built by Cys-71, His-74, and Cys-142.

This sequence belongs to the GTP cyclohydrolase I family. In terms of assembly, toroid-shaped homodecamer, composed of two pentamers of five dimers.

It carries out the reaction GTP + H2O = 7,8-dihydroneopterin 3'-triphosphate + formate + H(+). It participates in cofactor biosynthesis; 7,8-dihydroneopterin triphosphate biosynthesis; 7,8-dihydroneopterin triphosphate from GTP: step 1/1. The sequence is that of GTP cyclohydrolase 1 (folE) from Helicobacter pylori (strain J99 / ATCC 700824) (Campylobacter pylori J99).